A 495-amino-acid polypeptide reads, in one-letter code: Trimethylamine methyltransferase MttB1 (495 aa).

A non-standard amino acid (pyrrolysine) is located at residue O334.

Belongs to the trimethylamine methyltransferase family. In terms of assembly, can form a complex with MttC.

It carries out the reaction Co(I)-[trimethylamine-specific corrinoid protein] + trimethylamine + H(+) = methyl-Co(III)-[trimethylamine-specific corrinoid protein] + dimethylamine. It functions in the pathway one-carbon metabolism; methanogenesis from trimethylamine. Functionally, catalyzes the transfer of a methyl group from trimethylamine to the corrinoid cofactor of MttC. This is Trimethylamine methyltransferase MttB1 (mttB1) from Methanosarcina acetivorans (strain ATCC 35395 / DSM 2834 / JCM 12185 / C2A).